The following is a 499-amino-acid chain: Sialic acid-binding Ig-like lectin 8 (499 aa).

The first 16 residues, 1 to 16 (MLLLLLLLPLLWGTKG), serve as a signal peptide directing secretion. Topologically, residues 17-363 (MEGDRQYGDG…RPVSQVTLAA (347 aa)) are extracellular. A carbohydrate is bound by residues Y23, 72-75 (RPYQ), R125, and 134-138 (SYKSQ). The Ig-like V-type domain maps to 40-123 (GLCVHVPCSF…ARKRDKGSYF (84 aa)). Intrachain disulfides connect C42–C181, C47–C107, and C175–C224. Ig-like C2-type domains lie at 157–240 (PDIL…STVR) and 246–344 (PPWN…LSLS). N-linked (GlcNAc...) asparagine glycosylation occurs at N172. 2 N-linked (GlcNAc...) asparagine glycosylation sites follow: N249 and N267. C283 and C328 are joined by a disulfide. A helical membrane pass occupies residues 364 to 384 (VGGAGATALAFLSFCIIFIIV). Residues 385–499 (RSCRKKSARP…HNPSSKEVRG (115 aa)) lie on the Cytoplasmic side of the membrane. The segment at 410–443 (RGSASQGPLTESWKDGNPLKKPPPAVAPSSGEEG) is disordered. The ITIM motif signature appears at 445 to 450 (LHYATL). Disordered stretches follow at residues 451 to 470 (SFHK…DSEY) and 478 to 499 (RETA…EVRG). The short motif at 468–473 (SEYSEI) is the SLAM-like motif element.

The protein belongs to the immunoglobulin superfamily. SIGLEC (sialic acid binding Ig-like lectin) family. Expressed specifically on blood cells namely basophil, mast cells and eosinophils.

The protein localises to the membrane. Its function is as follows. Putative adhesion molecule that mediates sialic-acid dependent binding to blood cells. Preferentially binds to alpha-2,3-linked sialic acid. Also binds to alpha-2,6-linked sialic acid. The sialic acid recognition site may be masked by cis interactions with sialic acids on the same cell surface. Recognizes simultaneously epitopes having a terminal N-acetylneuraminic acid (sialic acid) and an underlying 6-O-sulfated galactose. Preferentially binds to Gal-6-sulfated sialyl-Lewis X glycan epitopes. The polypeptide is Sialic acid-binding Ig-like lectin 8 (SIGLEC8) (Homo sapiens (Human)).